The primary structure comprises 1889 residues: Bromodomain adjacent to zinc finger domain protein 2A (1889 aa).

3 disordered regions span residues 1–59 (MEME…NGLS), 384–433 (FGLN…SPAA), and 479–526 (TTPV…GAVA). Positions 35–59 (TNGSPMNFPQQGKSLNGDVNVNGLS) are enriched in polar residues. Residues 332-726 (EGNPVISALD…ESQTPVQGQA (395 aa)) are required for TTF1 binding. Positions 423–433 (PAVSPTASPAA) are enriched in low complexity. Polar residues-rich tracts occupy residues 479 to 489 (TTPVTSPQGSP) and 498 to 509 (QTVSPARKNVSS). Thr499 carries the post-translational modification Phosphothreonine. Phosphoserine is present on Ser501. Residues 538 to 609 (IATPEEVRLP…EHFSFSPRMP (72 aa)) form the MBD domain. Thr540 bears the Phosphothreonine mark. Ser605 is subject to Phosphoserine. Residues 638 to 791 (QAITGKRGRP…ARPSCRADKT (154 aa)) form a disordered region. 2 DNA-binding regions (a.T hook) span residues 641-653 (TGKR…NEKA) and 662-674 (KRGR…IKMP). Basic and acidic residues predominate over residues 648-660 (RNNEKAKNKEVPK). Over residues 661–670 (VKRGRGRPPK) the composition is skewed to basic residues. Lys672 bears the N6-acetyllysine; by KAT8 mark. A compositionally biased stretch (basic and acidic residues) spans 678 to 701 (NKTDNRLPKKLETQEILSEDDKAK). Residues 686 to 813 (KKLETQEILS…QQAILEEMKK (128 aa)) adopt a coiled-coil conformation. The span at 702–713 (MTKNKKKMRQKV) shows a compositional bias: basic residues. Polar residues predominate over residues 716 to 726 (GESQTPVQGQA). Composition is skewed to basic and acidic residues over residues 731–740 (KQDTKSLKQK) and 748–791 (AEKE…ADKT). Position 790 is an N6-acetyllysine (Lys790). Positions 839 to 904 (SRAFSDCLTI…LKAALHDPGL (66 aa)) constitute a DDT domain. Lys857 is covalently cross-linked (Glycyl lysine isopeptide (Lys-Gly) (interchain with G-Cter in SUMO2)). The segment at 1039–1063 (EETSGIEEEEEEENTTAVHGRRGRK) is disordered. At Ser1042 the chain carries Phosphoserine. The segment covering 1042-1052 (SGIEEEEEEEN) has biased composition (acidic residues). Glycyl lysine isopeptide (Lys-Gly) (interchain with G-Cter in SUMO2) cross-links involve residues Lys1141 and Lys1163. Disordered stretches follow at residues 1147–1247 (LMEV…GQSQ) and 1269–1397 (LSSS…GRPP). Position 1174 is a phosphoserine (Ser1174). A DNA-binding region (a.T hook 3) is located at residues 1176–1188 (ARSRGRPRKPKPG). Composition is skewed to polar residues over residues 1190 to 1231 (LQPQ…QPSS), 1269 to 1278 (LSSSVLTPDS), and 1331 to 1346 (DQPT…SKPM). 3 positions are modified to phosphoserine: Ser1374, Ser1377, and Ser1383. Positions 1390 to 1402 (PKRRGRPPSKFFK) form a DNA-binding region, a.T hook 4. Residue Ser1545 is modified to Phosphoserine. Glycyl lysine isopeptide (Lys-Gly) (interchain with G-Cter in SUMO2) cross-links involve residues Lys1662 and Lys1695. A PHD-type zinc finger spans residues 1662–1712 (KVTCLVCRKGDNDEFLLLCDGCDRGCHIYCHRPKMEAVPEGDWFCAVCLSQ). The interval 1720–1778 (QRPGFPKRGQKRKSSFPLTFPEGDSRRRMLSRSRDSPAVPRYPEDGLSPPKRRRHSMRS) is disordered. Position 1733 is a phosphoserine (Ser1733). Thr1738 is subject to Phosphothreonine. The span at 1742 to 1754 (GDSRRRMLSRSRD) shows a compositional bias: basic and acidic residues. 2 positions are modified to phosphoserine: Ser1755 and Ser1767. Basic residues predominate over residues 1769 to 1778 (PKRRRHSMRS). Residues 1777 to 1881 (RSHHSDLTFC…RFFESRWEEF (105 aa)) enclose the Bromo domain.

It belongs to the WAL family. Component of the NoRC-1 ISWI chromatin remodeling complex at least composed of SMARCA1 and BAZ2A/TIP5, which regulates the spacing of histone octamers on the DNA template to facilitate access to DNA. Within the NoRC-1 ISWI chromatin remodeling complex interacts with SMARCA1; the interaction is direct. Component of the NoRC-5 ISWI chromatin remodeling complex (also called the NoRC nucleolar-remodeling complex), at least composed of SMARCA5/SNF2H and BAZ2A/TIP5, which regulates the spacing of histone octamers on the DNA template to facilitate access to DNA. Within the NoRC-5 ISWI chromatin remodeling complexes interacts with SMARCA5/SNF2H; the interaction is direct. Interacts with TTF1; the interaction is required for recruitment of the NoRC-5 ISWI chromatin remodeling complex to rDNA. Interacts with HDAC1. Interacts with SIN3A. Interacts with DNMT1 and DNM3B. Interacts with BEND3 and USP21. Ubiquitinated. Deubiquitinated by USP21 leading to its stabilization. Post-translationally, acetylation at Lys-672 by KAT8/MOF promotes its dissociation from pRNA, affecting heterochromatin formation, nucleosome positioning and rDNA silencing. Deacetylation by SIRT1 in late S phase enhances pRNA-binding, allowing de novo DNA methylation and heterochromatin formation. Acetylation is high during S phase and declines to background levels in late S phase when the silent copies of rRNA genes are replicated.

The protein resides in the nucleus. It localises to the nucleolus. Functionally, regulatory subunit of the ATP-dependent NoRC-1 and NoRC-5 ISWI chromatin remodeling complexes, which form ordered nucleosome arrays on chromatin and facilitate access to DNA during DNA-templated processes such as DNA replication, transcription, and repair. Both complexes regulate the spacing of nucleosomes along the chromatin and have the ability to slide mononucleosomes to the center of a DNA template. Directly stimulates the ATPase activity of SMARCA5 in the NoRC-5 ISWI chromatin remodeling complex. The NoRC-1 ISWI chromatin remodeling complex has a lower ATP hydrolysis rate than the NoRC-5 ISWI chromatin remodeling complex. Within the NoRC-5 ISWI chromatin remodeling complex, mediates silencing of a fraction of rDNA by recruiting histone-modifying enzymes and DNA methyltransferases, leading to heterochromatin formation and transcriptional silencing. In the complex, it plays a central role by being recruited to rDNA and by targeting chromatin modifying enzymes such as HDAC1, leading to repress RNA polymerase I transcription. Recruited to rDNA via its interaction with TTF1 and its ability to recognize and bind histone H4 acetylated on 'Lys-16' (H4K16ac), leading to deacetylation of H4K5ac, H4K8ac, H4K12ac but not H4K16ac. Specifically binds pRNAs, 150-250 nucleotide RNAs that are complementary in sequence to the rDNA promoter; pRNA-binding is required for heterochromatin formation and rDNA silencing. The sequence is that of Bromodomain adjacent to zinc finger domain protein 2A (Baz2a) from Mus musculus (Mouse).